The following is a 312-amino-acid chain: Olfactory receptor 10D3 (312 aa).

The Extracellular portion of the chain corresponds to 1–26; sequence MEVKNCCMVTEFILLGIPHTEGLEMT. A helical membrane pass occupies residues 27–47; sequence LFVLFLPFYACTLLGNVSILV. Residues 48–57 lie on the Cytoplasmic side of the membrane; the sequence is AVMSSARLHT. A helical membrane pass occupies residues 58 to 78; sequence PMYFFLGNLSVFDMGFSSVTC. The Extracellular portion of the chain corresponds to 79–97; the sequence is PKMLLYLMGLSRLISYKDC. A disulfide bridge connects residues Cys97 and Cys179. A helical transmembrane segment spans residues 98 to 118; that stretch reads VCQLFFFHFLGSIECFLFTVM. At 119–139 the chain is on the cytoplasmic side; it reads AYDRFTAICYPLRYTVIMNPR. A helical transmembrane segment spans residues 140 to 160; the sequence is ICVALAVGTWLLGCIHSSILT. Topologically, residues 161-197 are extracellular; the sequence is SLTFTLPYCGPNEVDHFFCDIPALLPLACADTSLAQR. A helical transmembrane segment spans residues 198–218; the sequence is VSFTNVGLISLVCFLLILLSY. The Cytoplasmic portion of the chain corresponds to 219 to 239; it reads TRITISILSIRTTEGRRRAFS. Residues 240–260 traverse the membrane as a helical segment; it reads TCSAHLIAILCAYGPIITVYL. The Extracellular segment spans residues 261–266; it reads QPTPNP. The helical transmembrane segment at 267-287 threads the bilayer; that stretch reads MLGTVVQILMNLVGPMLNPLI. The Cytoplasmic portion of the chain corresponds to 288–312; it reads YTLRNKEVKTALKTILHRTGHVPES.

The protein belongs to the G-protein coupled receptor 1 family.

Its subcellular location is the cell membrane. Functionally, odorant receptor. This chain is Olfactory receptor 10D3, found in Homo sapiens (Human).